We begin with the raw amino-acid sequence, 121 residues long: Homeobox protein HD-6 (121 aa).

The segment at residues 28-87 (PKRSRIQLHDWQSMLLEHSFRMNPYPDRIEKYNLFLKTKIPMKNVKIWFQNRRAREKSFY) is a DNA-binding region (homeobox).

The protein localises to the nucleus. The protein is Homeobox protein HD-6 (HD-6) of Encephalitozoon cuniculi (strain GB-M1) (Microsporidian parasite).